A 387-amino-acid chain; its full sequence is MFRPRCGLRQKFVYVILKSILYSSWLLGIFPFKYEPKKRRLRRSMWLILFGVVISSSLLILMVKQSAEDREHGIMLDVFQRNALLYQISSLMGVVGVVSICTVHLRTLWRSKHLEEIYNGLMLLEAKYFCSNAVECPAFDGYVIQKGVVIVVGLLAPWMVHFGMPDSKLPVLNVLVVSMVKLGTLLLALHYHLGVVIIYRFVWLINRELLSLVCSLRGNHKGSSSRVRFLLKLYNKLVNLYSKLADCYDCQTVLMMAIFLAANIIVCFYMIVYRISLSKMSFFVMLIMFPLAIANNFMDFWLSMKVCDLLQKTGRQTSMILKLFNDIENMDKDLEISISDFALYCSHRRFKFLHCGLFHVNREMGFKMFVASVLYLLYLVQFDYMNL.

Topologically, residues 1–43 (MFRPRCGLRQKFVYVILKSILYSSWLLGIFPFKYEPKKRRLRR) are cytoplasmic. A helical membrane pass occupies residues 44–64 (SMWLILFGVVISSSLLILMVK). The Extracellular segment spans residues 65–82 (QSAEDREHGIMLDVFQRN). A helical transmembrane segment spans residues 83–103 (ALLYQISSLMGVVGVVSICTV). The Cytoplasmic segment spans residues 104 to 142 (HLRTLWRSKHLEEIYNGLMLLEAKYFCSNAVECPAFDGY). The helical transmembrane segment at 143 to 163 (VIQKGVVIVVGLLAPWMVHFG) threads the bilayer. Residues 164–184 (MPDSKLPVLNVLVVSMVKLGT) are Extracellular-facing. Residues 185–205 (LLLALHYHLGVVIIYRFVWLI) traverse the membrane as a helical segment. At 206–252 (NRELLSLVCSLRGNHKGSSSRVRFLLKLYNKLVNLYSKLADCYDCQT) the chain is on the cytoplasmic side. The chain crosses the membrane as a helical span at residues 253–273 (VLMMAIFLAANIIVCFYMIVY). The Extracellular portion of the chain corresponds to 274 to 281 (RISLSKMS). A helical membrane pass occupies residues 282-302 (FFVMLIMFPLAIANNFMDFWL). The Cytoplasmic segment spans residues 303 to 363 (SMKVCDLLQK…HCGLFHVNRE (61 aa)). A helical transmembrane segment spans residues 364 to 384 (MGFKMFVASVLYLLYLVQFDY). At 385–387 (MNL) the chain is on the extracellular side.

The protein belongs to the insect chemoreceptor superfamily. Gustatory receptor (GR) family. Gr22e subfamily. Expressed in neurons of the dorsal pharyngeal sense organs of larvae.

It is found in the cell membrane. In terms of biological role, probable gustatory receptor which mediates acceptance or avoidance behavior, depending on its substrates. The sequence is that of Putative gustatory receptor 22d from Drosophila melanogaster (Fruit fly).